The primary structure comprises 155 residues: 6,7-dimethyl-8-ribityllumazine synthase (155 aa).

Residues phenylalanine 23, 57–59, and 81–83 each bind 5-amino-6-(D-ribitylamino)uracil; these read AFE and AVI. 86-87 contacts (2S)-2-hydroxy-3-oxobutyl phosphate; sequence ST. Catalysis depends on histidine 89, which acts as the Proton donor. Position 114 (phenylalanine 114) interacts with 5-amino-6-(D-ribitylamino)uracil. Residue arginine 128 participates in (2S)-2-hydroxy-3-oxobutyl phosphate binding.

The protein belongs to the DMRL synthase family.

The catalysed reaction is (2S)-2-hydroxy-3-oxobutyl phosphate + 5-amino-6-(D-ribitylamino)uracil = 6,7-dimethyl-8-(1-D-ribityl)lumazine + phosphate + 2 H2O + H(+). The protein operates within cofactor biosynthesis; riboflavin biosynthesis; riboflavin from 2-hydroxy-3-oxobutyl phosphate and 5-amino-6-(D-ribitylamino)uracil: step 1/2. Catalyzes the formation of 6,7-dimethyl-8-ribityllumazine by condensation of 5-amino-6-(D-ribitylamino)uracil with 3,4-dihydroxy-2-butanone 4-phosphate. This is the penultimate step in the biosynthesis of riboflavin. This Pelobacter propionicus (strain DSM 2379 / NBRC 103807 / OttBd1) protein is 6,7-dimethyl-8-ribityllumazine synthase.